The sequence spans 456 residues: MGWAGDAGCTPRPPIRPRPASERRVIIVLFLGLLLDLLAFTLLLPLLPGLLERHGREQDPLYGSWQRGVDWFASAIGMPAEKRYNSVLFGGLIGSAFSLLQFFSAPLTGAASDYLGRRPVMMLSLTGLAISYAVWATSRSFKAFLASRVIGGISKGNVNLSTAIVADLGSPPTRSQGMAVIGVAFSLAFTLGPMLGAFLSVEMVPWISLLFAISDMLFIFCFLPETLPQEKRASSVTLGFHTAAHLLSPLALLRFAAVTHSQDPPAEHRLRNLRRLGLVYFLYLFLFSGLEYTLSFLAHQRFQFSSLQQGKMFFFIGLTMATIQGTYARRISPGKEAAAVTRAMLLLVPAFLLIGWAHSLPTLGLGLMLYSFAAAVVVPGLSTMVSSYGSPGQKGTIMGILRSLGALGRALGPVVAASVYWLTGAQVCFTVCSALFLLPFLLLWKLKHPAETSKEE.

3 helical membrane-spanning segments follow: residues 25–45 (VIIV…LLLP), 87–107 (VLFG…SAPL), and 114–136 (YLGR…AVWA). Asn-159 carries an N-linked (GlcNAc...) asparagine glycan. 8 consecutive transmembrane segments (helical) span residues 179–199 (AVIG…GAFL), 203–223 (MVPW…FCFL), 278–298 (LVYF…SFLA), 311–328 (KMFF…GTYA), 345–365 (LLLV…TLGL), 366–386 (GLML…TMVS), 403–423 (SLGA…YWLT), and 424–444 (GAQV…LLLW).

This sequence belongs to the major facilitator superfamily. In terms of tissue distribution, esxpressed in luminal membrane of renal tubules. Expressed at the surface of eosinophils (at protein level).

It is found in the nucleus inner membrane. The protein resides in the cell membrane. In terms of biological role, probable organic anion transporter which may serve as a transporter for some non-steroidal anti-inflammatory drugs (NSAIDs) as well as other organic anions across the luminal membranes of renal proximal tubules at the final excretion step into the urine. The protein is Major facilitator superfamily domain-containing protein 10 (Mfsd10) of Mus musculus (Mouse).